Here is a 187-residue protein sequence, read N- to C-terminus: Adenylate kinase (187 aa).

Residue 10-15 (GSGKGT) participates in ATP binding. The segment at 30–59 (STGDLLRAEVAAGSPLGLKAKEVMARGDLV) is NMP. Residues T31, R36, 57–59 (DLV), 85–88 (GYPR), and Q92 contribute to the AMP site. The interval 126 to 136 (GRAKAEGREDD) is LID. An ATP-binding site is contributed by R127. Residues R133 and R144 each coordinate AMP. Residue G172 coordinates ATP.

This sequence belongs to the adenylate kinase family. In terms of assembly, monomer.

The protein localises to the cytoplasm. The enzyme catalyses AMP + ATP = 2 ADP. The protein operates within purine metabolism; AMP biosynthesis via salvage pathway; AMP from ADP: step 1/1. Catalyzes the reversible transfer of the terminal phosphate group between ATP and AMP. Plays an important role in cellular energy homeostasis and in adenine nucleotide metabolism. The chain is Adenylate kinase from Xanthomonas axonopodis pv. citri (strain 306).